A 369-amino-acid polypeptide reads, in one-letter code: MNKAYYIGLMSGTSMDGVDAVLVDFAGEQPQLIGTHTETIPTHLLKGLQRLCLPGTDEINRLGRLDRSVGKLFALAVNNLLAKTKIAKDEIIAIGSHGQTVRHMPNLEVGFTLQIGDPNTIATETGIDVIADFRRKDIALGGQGAPLVPAFHQQTFAQVGKKRVILNIGGIANITYLPGNSEEVLGFDTGPGNTLIDAWVQQVKNESYDKNGAWAASGKTDPQLLAQLLSHPYFSLAYPKSTGRELFNQAWLEQQLSAFNQLNEEDIQSTLLDLTCHSIAQDILKLAQEGELFVCGGGAFNAELMQRLAALLPGYRIDTTSALGVDPKWAEGIAFAWLAMRYQLGLPANLPAVTGASREAILGGRFSAK.

12–19 contributes to the ATP binding site; the sequence is GTSMDGVD.

Belongs to the anhydro-N-acetylmuramic acid kinase family.

The enzyme catalyses 1,6-anhydro-N-acetyl-beta-muramate + ATP + H2O = N-acetyl-D-muramate 6-phosphate + ADP + H(+). The protein operates within amino-sugar metabolism; 1,6-anhydro-N-acetylmuramate degradation. Its pathway is cell wall biogenesis; peptidoglycan recycling. Its function is as follows. Catalyzes the specific phosphorylation of 1,6-anhydro-N-acetylmuramic acid (anhMurNAc) with the simultaneous cleavage of the 1,6-anhydro ring, generating MurNAc-6-P. Is required for the utilization of anhMurNAc either imported from the medium or derived from its own cell wall murein, and thus plays a role in cell wall recycling. The sequence is that of Anhydro-N-acetylmuramic acid kinase from Shewanella oneidensis (strain ATCC 700550 / JCM 31522 / CIP 106686 / LMG 19005 / NCIMB 14063 / MR-1).